We begin with the raw amino-acid sequence, 69 residues long: Arabinogalactan protein 24 (69 aa).

Residues 1–25 form the signal peptide; that stretch reads MMMMTKMFVQIAVVCLLATMAVVSA. 4 positions are modified to 4-hydroxyproline: Pro34, Pro36, Pro38, and Pro40. 4 O-linked (Ara...) hydroxyproline glycosylation sites follow: Pro34, Pro36, Pro38, and Pro40. Residue Ser42 is the site of GPI-anchor amidated serine attachment. A propeptide spans 43–69 (removed in mature form); it reads SSTVVSATNMFTVLAIAAVALVVGSNH.

The protein belongs to the AG-peptide AGP family. Contains 4-hydroxyproline; hydroxylated on Pro-34, Pro-36, Pro-38 and Pro-40. In terms of processing, O-glycosylated on hydroxyprolines; noncontiguous hydroxylproline residues are glycosylated with arabinogalactan.

It localises to the cell membrane. In terms of biological role, proteoglycan that seems to be implicated in diverse developmental roles such as differentiation, cell-cell recognition, embryogenesis and programmed cell death. In Arabidopsis thaliana (Mouse-ear cress), this protein is Arabinogalactan protein 24.